A 222-amino-acid chain; its full sequence is Protein-L-isoaspartate O-methyltransferase (222 aa).

Residue serine 69 is part of the active site.

Belongs to the methyltransferase superfamily. L-isoaspartyl/D-aspartyl protein methyltransferase family.

It is found in the cytoplasm. The catalysed reaction is [protein]-L-isoaspartate + S-adenosyl-L-methionine = [protein]-L-isoaspartate alpha-methyl ester + S-adenosyl-L-homocysteine. Catalyzes the methyl esterification of L-isoaspartyl residues in peptides and proteins that result from spontaneous decomposition of normal L-aspartyl and L-asparaginyl residues. It plays a role in the repair and/or degradation of damaged proteins. The chain is Protein-L-isoaspartate O-methyltransferase from Nitrosomonas europaea (strain ATCC 19718 / CIP 103999 / KCTC 2705 / NBRC 14298).